A 356-amino-acid chain; its full sequence is Phosphoribosyl pyrophosphate synthase-associated protein 1 (356 aa).

M1 bears the N-acetylmethionine mark. Phosphoserine is present on residues S177 and S215.

The protein belongs to the ribose-phosphate pyrophosphokinase family. Binds to PRPS1 and PRPS2.

Seems to play a negative regulatory role in 5-phosphoribose 1-diphosphate synthesis. This chain is Phosphoribosyl pyrophosphate synthase-associated protein 1 (PRPSAP1), found in Bos taurus (Bovine).